A 623-amino-acid polypeptide reads, in one-letter code: Glutathione import ATP-binding protein GsiA (623 aa).

ABC transporter domains are found at residues 15-269 and 314-564; these read VENL…RALL and LRVR…RKLL. Residues 49 to 56 and 357 to 364 contribute to the ATP site; these read GESGSGKS.

The protein belongs to the ABC transporter superfamily. Glutathione importer (TC 3.A.1.5.11) family. As to quaternary structure, the complex is composed of two ATP-binding proteins (GsiA), two transmembrane proteins (GsiC and GsiD) and a solute-binding protein (GsiB).

The protein resides in the cell inner membrane. It carries out the reaction glutathione(out) + ATP + H2O = glutathione(in) + ADP + phosphate + H(+). Functionally, part of the ABC transporter complex GsiABCD involved in glutathione import. Responsible for energy coupling to the transport system. This is Glutathione import ATP-binding protein GsiA from Shigella sonnei (strain Ss046).